The sequence spans 308 residues: Sulfate adenylyltransferase subunit 2 (308 aa).

The tract at residues 286–308 (RQGRIIDHDGSASMEKKKQEGYF) is disordered.

It belongs to the PAPS reductase family. CysD subfamily. Heterodimer composed of CysD, the smaller subunit, and CysN.

The enzyme catalyses sulfate + ATP + H(+) = adenosine 5'-phosphosulfate + diphosphate. The protein operates within sulfur metabolism; hydrogen sulfide biosynthesis; sulfite from sulfate: step 1/3. Functionally, with CysN forms the ATP sulfurylase (ATPS) that catalyzes the adenylation of sulfate producing adenosine 5'-phosphosulfate (APS) and diphosphate, the first enzymatic step in sulfur assimilation pathway. APS synthesis involves the formation of a high-energy phosphoric-sulfuric acid anhydride bond driven by GTP hydrolysis by CysN coupled to ATP hydrolysis by CysD. The polypeptide is Sulfate adenylyltransferase subunit 2 (Nocardia farcinica (strain IFM 10152)).